The following is a 475-amino-acid chain: Citrate synthase, mitochondrial (475 aa).

Active-site residues include His310, His356, and Asp411.

The protein belongs to the citrate synthase family.

The protein resides in the mitochondrion matrix. The enzyme catalyses oxaloacetate + acetyl-CoA + H2O = citrate + CoA + H(+). It participates in carbohydrate metabolism; tricarboxylic acid cycle; isocitrate from oxaloacetate: step 1/2. The sequence is that of Citrate synthase, mitochondrial (cit-1) from Aspergillus niger.